Reading from the N-terminus, the 253-residue chain is 5-oxoprolinase subunit A (253 aa).

The protein belongs to the LamB/PxpA family. In terms of assembly, forms a complex composed of PxpA, PxpB and PxpC.

The catalysed reaction is 5-oxo-L-proline + ATP + 2 H2O = L-glutamate + ADP + phosphate + H(+). In terms of biological role, catalyzes the cleavage of 5-oxoproline to form L-glutamate coupled to the hydrolysis of ATP to ADP and inorganic phosphate. This chain is 5-oxoprolinase subunit A, found in Bacillus cereus (strain 03BB102).